The primary structure comprises 138 residues: Transcription antitermination protein NusB (138 aa).

It belongs to the NusB family.

In terms of biological role, involved in transcription antitermination. Required for transcription of ribosomal RNA (rRNA) genes. Binds specifically to the boxA antiterminator sequence of the ribosomal RNA (rrn) operons. The polypeptide is Transcription antitermination protein NusB (Colwellia psychrerythraea (strain 34H / ATCC BAA-681) (Vibrio psychroerythus)).